A 344-amino-acid chain; its full sequence is Putative esterase NocK (344 aa).

The tat-type signal signal peptide spans 1–34; it reads MIGVTRRSGLALAVLVSSAACAGAEPVAPPPAPA. Residues 265-295 form a disordered region; sequence GGADERRREEARPAAAPGGTSTSRETCANPD. Positions 266 to 276 are enriched in basic and acidic residues; sequence GADERRREEAR.

The protein belongs to the AB hydrolase superfamily. In terms of processing, predicted to be exported by the Tat system. The position of the signal peptide cleavage has not been experimentally proven.

The polypeptide is Putative esterase NocK (Nocardia uniformis subsp. tsuyamanensis).